Reading from the N-terminus, the 739-residue chain is NAD(P)H-quinone oxidoreductase subunit 5, chloroplastic (739 aa).

Transmembrane regions (helical) follow at residues 9 to 29 (WIIP…LLLV), 39 to 59 (IWAF…ADLA), 89 to 109 (IDPL…MVLI), 125 to 145 (FAYM…SNLI), 147 to 167 (IYIF…FWFT), 185 to 205 (GDFG…SFEF), 224 to 244 (LFAA…SAQF), 258 to 278 (TPIS…FLVA), 280 to 300 (LLPL…IGII), 327 to 347 (LGYI…FHLI), 354 to 374 (ALLF…VGYS), 396 to 416 (TTFF…CFWS), 425 to 445 (WLYS…TAFY), 544 to 564 (LFPM…GIPF), 603 to 623 (IYSV…YGSV), and 716 to 736 (ISSY…IYYF).

Belongs to the complex I subunit 5 family. As to quaternary structure, NDH is composed of at least 16 different subunits, 5 of which are encoded in the nucleus.

It localises to the plastid. Its subcellular location is the chloroplast thylakoid membrane. The catalysed reaction is a plastoquinone + NADH + (n+1) H(+)(in) = a plastoquinol + NAD(+) + n H(+)(out). It carries out the reaction a plastoquinone + NADPH + (n+1) H(+)(in) = a plastoquinol + NADP(+) + n H(+)(out). Its function is as follows. NDH shuttles electrons from NAD(P)H:plastoquinone, via FMN and iron-sulfur (Fe-S) centers, to quinones in the photosynthetic chain and possibly in a chloroplast respiratory chain. The immediate electron acceptor for the enzyme in this species is believed to be plastoquinone. Couples the redox reaction to proton translocation, and thus conserves the redox energy in a proton gradient. This Acorus calamus (Sweet flag) protein is NAD(P)H-quinone oxidoreductase subunit 5, chloroplastic (ndhF).